The following is a 57-amino-acid chain: Temporin-ALk (57 aa).

The N-terminal stretch at M1–C22 is a signal peptide. The propeptide occupies E23–R46. S56 bears the Serine amide mark.

The protein belongs to the frog skin active peptide (FSAP) family. Temporin subfamily. Expressed by the skin glands.

Its subcellular location is the secreted. In terms of biological role, antimicrobial peptide with weak activity against Gram-positive and Gram-negative bacteria and against fungi. Has been tested against S.aureus (MIC=15.0 ug/mL), B.pumilus (no activity detected), B.cereus (no activity detected), E.coli (MIC=30.0 ug/mL), B.dysenteriae (MIC=60.0 ug/mL), A.cacoaceticus (MIC=75.0 ug/mL), P.aeruginosa (MIC=25.0 ug/mL) and C.albicans (MIC=15.0 ug/mL). Also shows a weak hemolytic activity. The polypeptide is Temporin-ALk (Amolops loloensis (Lolokou Sucker Frog)).